Reading from the N-terminus, the 772-residue chain is Mitochondrial intermediate peptidase (772 aa).

Residues 1–37 (MLRTIILKAGSNASIPSLSRQNKLLRFFATAGAVSRT) constitute a mitochondrion transit peptide. H558 is a binding site for Zn(2+). Residue E559 is part of the active site. Zn(2+)-binding residues include H562 and H565.

This sequence belongs to the peptidase M3 family. It depends on Zn(2+) as a cofactor.

It is found in the mitochondrion matrix. It carries out the reaction Release of an N-terminal octapeptide as second stage of processing of some proteins imported into the mitochondrion.. Its activity is regulated as follows. Stimulated by Fe(2+). Its function is as follows. Cleaves proteins, imported into the mitochondrion, to their mature size. While most mitochondrial precursor proteins are processed to the mature form in one step by mitochondrial processing peptidase (MPP), the sequential cleavage by MIP of an octapeptide after initial processing by MPP is a required step for a subgroup of nuclear-encoded precursor proteins destined for the matrix or the inner membrane. Cleaves precursor proteins of respiratory components, including subunits of the electron transport chain and tricarboxylic acid cycle enzymes, and components of the mitochondrial genetic machinery, including ribosomal proteins, translation factors, and proteins required for mitochondrial DNA metabolism. This chain is Mitochondrial intermediate peptidase (OCT1), found in Saccharomyces cerevisiae (strain YJM789) (Baker's yeast).